The chain runs to 218 residues: Copper acquisition factor BIM1 (218 aa).

Residues 1–19 (MFALKFILITSFIASTALA) form the signal peptide. 2 residues coordinate Cu(2+): His20 and His65. 2 disulfide bridges follow: Cys40–Cys144 and Cys110–Cys161. 3 N-linked (GlcNAc...) asparagine glycosylation sites follow: Asn87, Asn91, and Asn124. Asp138 contributes to the Cu(2+) binding site. N-linked (GlcNAc...) asparagine glycosylation is found at Asn158 and Asn170. Residues 160 to 194 (TCTDDASRTSNASSTSSGSATATSAAATSSSSGTS) form a disordered region. The span at 167–194 (RTSNASSTSSGSATATSAAATSSSSGTS) shows a compositional bias: low complexity. Residue Ser190 is the site of GPI-anchor amidated serine attachment. Residues 191–218 (SGTSGAIKEVVGLGALSLALGIAGLIIL) constitute a propeptide, removed in mature form.

Belongs to the X325 family. The cofactor is Cu(2+).

The protein localises to the cell membrane. Its function is as follows. Lytic polysaccharide monooxygenase-like protein that has diverged to biological functions other than polysaccharide degradation since it does not perform oxidative cleavage of polysaccharides. Cell surface-bound protein that functions in the copper-accumulation pathway shared by the CUF1-dependent copper transporter CTR1. Involved in maintaining cell wall integrity during copper deficiency. Binds Cu(2+) with an estimated 1:1 stoichiometry and might serve as an extracellular copper ligand. FRE4 and FRE7 metalloreductases probably function together with CTR1 and BIM1 to liberate the Cu(2+) bound to the BIM1 copper-binding site for subsequent import of Cu(+) into the cell by CTR1, via the reduction of BIM1-bound Cu(2+) to Cu(+) to reduce binding affinity for BIM1 but increase affinity for CTR1. Facilitates copper acquisition in the brain of mammalian hosts and acts as a copper-dependent virulence trait in fungal meningitis. While BIM1 plays a critical role in cryptococcal meningitis, at least in part through its role in copper acquisition, it could play additional roles during copper limitation or as a means to invade and colonize host tissues in the brain, by compromising host carbohydrate integrity via its lytic polysaccharide monooxygenase (LPMO) activity, which has still to be determined. This is Copper acquisition factor BIM1 from Cryptococcus neoformans var. neoformans serotype D (strain JEC21 / ATCC MYA-565) (Filobasidiella neoformans).